A 386-amino-acid chain; its full sequence is UDP-N-acetylbacillosamine transaminase (386 aa).

Residues 25–28 (NYIA), A56, and S179 contribute to the substrate site. K184 is modified (N6-(pyridoxal phosphate)lysine). Substrate-binding positions include N227 and 325–328 (QIET).

The protein belongs to the DegT/DnrJ/EryC1 family. Requires pyridoxal 5'-phosphate as cofactor.

It catalyses the reaction UDP-N-acetylbacillosamine + 2-oxoglutarate = UDP-2-acetamido-2,6-dideoxy-alpha-D-xylo-hex-4-ulose + L-glutamate. The protein operates within protein modification; protein glycosylation. Aminotransferase involved in the bacillosamine biosynthesis pathway by producing UDP-4-amino-4,6-dideoxy-alpha-D-GlcNAc (UDP-2-acetamido-4-amino-2,4,6-trideoxy-alpha-D-glucopyranose), a precursor used in the production of the glycan component 2,4-diacetamido-2,4,6-trideoxy-alpha-D-glucopyranose. Required for host colonization and virulence. Involved in the N-linked protein glycosylation pathway. The protein is UDP-N-acetylbacillosamine transaminase (pglE) of Campylobacter jejuni subsp. jejuni serotype O:2 (strain ATCC 700819 / NCTC 11168).